The chain runs to 38 residues: 4 kDa defensin (38 aa).

Intrachain disulfides connect cysteine 4-cysteine 25, cysteine 11-cysteine 33, and cysteine 15-cysteine 35.

It belongs to the invertebrate defensin family. Type 2 subfamily.

The protein resides in the secreted. Dual-function peptide with antimicrobial and potassium channel-blocking activities. Shows inhibitory activity against Gram-positive bacteria such as M.luteus, S.aureus, B.subtilis, and M.luteus as well as methicillin-resistant S.aureus (MIC=0.1-20 uM). Does not act on bacteria by disrupting membranes. Also moderately inhibits Kv1.1/KCNA1, Kv1.2/KCNA2, and Kv1.3/KCNA3 potassium channels. Inhibits potassium channels by interacting with the pore region. Does not show hemolytic activity. This chain is 4 kDa defensin, found in Leiurus hebraeus (Hebrew deathstalker scorpion).